Consider the following 102-residue polypeptide: Protein translation factor SUI1 homolog (102 aa).

It belongs to the SUI1 family.

This chain is Protein translation factor SUI1 homolog, found in Cenarchaeum symbiosum (strain A).